The sequence spans 92 residues: Large ribosomal subunit protein bL25 (92 aa).

The protein belongs to the bacterial ribosomal protein bL25 family. In terms of assembly, part of the 50S ribosomal subunit; part of the 5S rRNA/L5/L18/L25 subcomplex. Contacts the 5S rRNA. Binds to the 5S rRNA independently of L5 and L18.

This is one of the proteins that binds to the 5S RNA in the ribosome where it forms part of the central protuberance. This is Large ribosomal subunit protein bL25 from Vibrio cholerae serotype O1 (strain ATCC 39541 / Classical Ogawa 395 / O395).